The following is a 374-amino-acid chain: N5-carboxyaminoimidazole ribonucleotide synthase (374 aa).

ATP is bound by residues R108, K148, 153 to 159, 183 to 186, E191, H214, and 266 to 267; these read GYDGKGQ, EKYL, and NE. Residues 112–296 enclose the ATP-grasp domain; it reads KETLKSAGTK…QFDTHILAVT (185 aa).

The protein belongs to the PurK/PurT family. As to quaternary structure, homodimer.

It catalyses the reaction 5-amino-1-(5-phospho-beta-D-ribosyl)imidazole + hydrogencarbonate + ATP = 5-carboxyamino-1-(5-phospho-D-ribosyl)imidazole + ADP + phosphate + 2 H(+). Its pathway is purine metabolism; IMP biosynthesis via de novo pathway; 5-amino-1-(5-phospho-D-ribosyl)imidazole-4-carboxylate from 5-amino-1-(5-phospho-D-ribosyl)imidazole (N5-CAIR route): step 1/2. In terms of biological role, catalyzes the ATP-dependent conversion of 5-aminoimidazole ribonucleotide (AIR) and HCO(3)(-) to N5-carboxyaminoimidazole ribonucleotide (N5-CAIR). The chain is N5-carboxyaminoimidazole ribonucleotide synthase from Staphylococcus aureus (strain MRSA252).